The following is a 242-amino-acid chain: Uridylate kinase (242 aa).

16–19 (KVSG) lines the ATP pocket. Residue Gly-58 participates in UMP binding. ATP contacts are provided by Gly-59 and Arg-63. UMP contacts are provided by residues Asp-78 and 139-146 (TGNPFCTT). Thr-166, Gln-167, Tyr-172, and Asp-175 together coordinate ATP.

This sequence belongs to the UMP kinase family. In terms of assembly, homohexamer.

Its subcellular location is the cytoplasm. It carries out the reaction UMP + ATP = UDP + ADP. Its pathway is pyrimidine metabolism; CTP biosynthesis via de novo pathway; UDP from UMP (UMPK route): step 1/1. Its activity is regulated as follows. Inhibited by UTP. In terms of biological role, catalyzes the reversible phosphorylation of UMP to UDP. The protein is Uridylate kinase of Rickettsia prowazekii (strain Madrid E).